A 440-amino-acid polypeptide reads, in one-letter code: Asparagine--tRNA ligase (440 aa).

The protein belongs to the class-II aminoacyl-tRNA synthetase family. Homodimer.

The protein resides in the cytoplasm. It catalyses the reaction tRNA(Asn) + L-asparagine + ATP = L-asparaginyl-tRNA(Asn) + AMP + diphosphate + H(+). In Roseiflexus castenholzii (strain DSM 13941 / HLO8), this protein is Asparagine--tRNA ligase.